Consider the following 88-residue polypeptide: Small cysteine-rich outer membrane protein OmcA (88 aa).

The signal sequence occupies residues 1-18 (MKKTALLAALCSVVSLSS). Cysteine 19 carries N-palmitoyl cysteine lipidation. The S-diacylglycerol cysteine moiety is linked to residue cysteine 19. The segment at 67–88 (THQDAEHGPQAREIPVDGKCRQ) is disordered.

Part of a disulfide cross-linked outer membrane complex (COMC) composed of the major outer membrane porin (MOMP), the small cysteine-rich protein (OmcA) and the large cysteine-rich periplasmic protein (OmcB).

The protein localises to the cell outer membrane. In elementary bodies (EBs, the infectious stage, which is able to survive outside the host cell) provides the structural integrity of the outer envelope through disulfide cross-links with the large cysteine-rich periplasmic protein and the major outer membrane porin. It has been described in publications as the Sarkosyl-insoluble COMC (Chlamydia outer membrane complex), and serves as the functional equivalent of peptidoglycan. This chain is Small cysteine-rich outer membrane protein OmcA (omcA), found in Chlamydia trachomatis serovar L2 (strain ATCC VR-902B / DSM 19102 / 434/Bu).